A 443-amino-acid chain; its full sequence is C4-dicarboxylate transport protein (443 aa).

Helical transmembrane passes span 10-30 (SLYF…HFYP), 46-66 (LIKM…IAGM), 78-98 (YALL…LIVV), 143-163 (IVGA…VIFG), 199-219 (PIGA…GSLV), 224-244 (LMIC…GGIC), 291-311 (VVGL…SIYL), 332-352 (ITLL…TGSG), and 354-374 (IVLA…LALI).

The protein belongs to the dicarboxylate/amino acid:cation symporter (DAACS) (TC 2.A.23) family.

The protein resides in the cell inner membrane. Its function is as follows. Responsible for the transport of dicarboxylates such as succinate, fumarate, and malate from the periplasm across the membrane. The chain is C4-dicarboxylate transport protein from Pseudomonas fluorescens (strain SBW25).